The following is a 144-amino-acid chain: Putative protein PHLOEM PROTEIN 2-LIKE B4 (144 aa).

The protein is Putative protein PHLOEM PROTEIN 2-LIKE B4 (PP2B4) of Arabidopsis thaliana (Mouse-ear cress).